We begin with the raw amino-acid sequence, 152 residues long: UPF0260 protein BR1477/BS1330_I1471 (152 aa).

It belongs to the UPF0260 family.

In Brucella suis biovar 1 (strain 1330), this protein is UPF0260 protein BR1477/BS1330_I1471.